Reading from the N-terminus, the 373-residue chain is XK-related protein 9 (373 aa).

8 helical membrane-spanning segments follow: residues 8 to 28 (FMMSVLGIIIYVTDLIVDIWV), 38 to 58 (YVFSALALSFMLFGTLVAQCF), 166 to 186 (AAIMVSCCAISWSTVDYQVAL), 203 to 223 (ITYLFYKLFTLLSWMLSVVLL), 224 to 244 (LFLNVKIALFLLLFLWLLGII), 256 to 276 (CISMEFLYRIVVGFILIFTFF), 295 to 315 (VLGTLGILTVFWVCPLTIFNP), and 318 to 338 (FIPISITIVLTLLLGILFLIV).

This sequence belongs to the XK family. In terms of processing, undergoes proteolytic processing by caspase-3 (CASP3), caspase-6 (CASP6) and caspase-7 (CASP7) to generate the XK-related protein 9, processed form, leading to its activation.

It localises to the cell membrane. It catalyses the reaction a 1,2-diacyl-sn-glycero-3-phospho-L-serine(in) = a 1,2-diacyl-sn-glycero-3-phospho-L-serine(out). Activated upon caspase cleavage to generate the XK-related protein 9, processed form. Does not act prior the onset of apoptosis. Its function is as follows. Phospholipid scramblase that promotes phosphatidylserine exposure on apoptotic cell surface. Phosphatidylserine is a specific marker only present at the surface of apoptotic cells and acts as a specific signal for engulfment. This is XK-related protein 9 from Homo sapiens (Human).